Consider the following 554-residue polypeptide: DNA mismatch repair protein MutL (554 aa).

Belongs to the DNA mismatch repair MutL/HexB family.

Functionally, this protein is involved in the repair of mismatches in DNA. It is required for dam-dependent methyl-directed DNA mismatch repair. May act as a 'molecular matchmaker', a protein that promotes the formation of a stable complex between two or more DNA-binding proteins in an ATP-dependent manner without itself being part of a final effector complex. The protein is DNA mismatch repair protein MutL of Crocosphaera subtropica (strain ATCC 51142 / BH68) (Cyanothece sp. (strain ATCC 51142)).